Consider the following 160-residue polypeptide: Growth arrest and DNA damage-inducible protein GADD45 beta (160 aa).

It belongs to the GADD45 family. Interacts with GADD45GIP1.

Its function is as follows. Involved in the regulation of growth and apoptosis. Mediates activation of stress-responsive MTK1/MEKK4 MAPKKK. In Bos taurus (Bovine), this protein is Growth arrest and DNA damage-inducible protein GADD45 beta (GADD45B).